The chain runs to 177 residues: Transcriptional repressor NrdR (177 aa).

A zinc finger lies at 3–34; sequence CPYCGGSETQVKDSRPSEDGAAIRRRRVCPDC. One can recognise an ATP-cone domain in the interval 49–139; it reads VVVLKRSGKR…VYKNFREARD (91 aa). Residues 148–177 are disordered; the sequence is SDGMPVPAAAPEAEGDPEPEASGRRRAGRP.

This sequence belongs to the NrdR family. Zn(2+) is required as a cofactor.

Its function is as follows. Negatively regulates transcription of bacterial ribonucleotide reductase nrd genes and operons by binding to NrdR-boxes. This is Transcriptional repressor NrdR from Methylobacterium radiotolerans (strain ATCC 27329 / DSM 1819 / JCM 2831 / NBRC 15690 / NCIMB 10815 / 0-1).